Consider the following 250-residue polypeptide: 4-hydroxy-tetrahydrodipicolinate reductase (250 aa).

NAD(+)-binding positions include 10-15 (GARGRI), 78-80 (GTT), and 105-108 (APNF). Catalysis depends on His135, which acts as the Proton donor/acceptor. Residue His136 coordinates (S)-2,3,4,5-tetrahydrodipicolinate. The active-site Proton donor is the Lys139. 145–146 (GT) provides a ligand contact to (S)-2,3,4,5-tetrahydrodipicolinate. The segment at 158-177 (RAEAGSAPQPDATTTALDGA) is disordered.

The protein belongs to the DapB family.

It is found in the cytoplasm. It catalyses the reaction (S)-2,3,4,5-tetrahydrodipicolinate + NAD(+) + H2O = (2S,4S)-4-hydroxy-2,3,4,5-tetrahydrodipicolinate + NADH + H(+). It carries out the reaction (S)-2,3,4,5-tetrahydrodipicolinate + NADP(+) + H2O = (2S,4S)-4-hydroxy-2,3,4,5-tetrahydrodipicolinate + NADPH + H(+). It participates in amino-acid biosynthesis; L-lysine biosynthesis via DAP pathway; (S)-tetrahydrodipicolinate from L-aspartate: step 4/4. Catalyzes the conversion of 4-hydroxy-tetrahydrodipicolinate (HTPA) to tetrahydrodipicolinate. The polypeptide is 4-hydroxy-tetrahydrodipicolinate reductase (Streptomyces griseus subsp. griseus (strain JCM 4626 / CBS 651.72 / NBRC 13350 / KCC S-0626 / ISP 5235)).